Consider the following 865-residue polypeptide: Nicotinate catabolism cluster-specific transcription factor (865 aa).

C2H2-type zinc fingers lie at residues H8 to H32 and Y41 to H63. The tract at residues G74–D168 is disordered. The short motif at V77–A87 is the Nuclear localization signal(NLS) element. The span at L78–D89 shows a compositional bias: basic and acidic residues. The segment covering P96–Q105 has biased composition (basic residues). Low complexity predominate over residues G108–P132. The Nuclear export signal (NES) motif lies at L285–L289.

It localises to the nucleus. Its function is as follows. Transcription factor that specifically regulates the expression of the hxn gene cluster that mediates the degradation of nicotinate and related metabolites. In Emericella nidulans (strain FGSC A4 / ATCC 38163 / CBS 112.46 / NRRL 194 / M139) (Aspergillus nidulans), this protein is Nicotinate catabolism cluster-specific transcription factor.